The chain runs to 364 residues: Probable UDP-arabinopyranose mutase 4 (364 aa).

Residues 106 to 108 (DDD) carry the DXD motif motif. Arg-154 is a glycosylation site (N-linked (Glc...) arginine).

It belongs to the RGP family. Heteromers with RGP1 and RGP2. Mn(2+) serves as cofactor. It depends on Mg(2+) as a cofactor. Post-translationally, reversibly glycosylated in vitro by UDP-glucose, UDP-xylose and UDP-galactose, but not UDP-mannose. Specifically expressed in developing seeds.

It is found in the cytoplasm. The protein resides in the cytosol. It localises to the golgi apparatus. It carries out the reaction UDP-beta-L-arabinofuranose = UDP-beta-L-arabinopyranose. Functionally, probable UDP-L-arabinose mutase involved in the biosynthesis of cell wall non-cellulosic polysaccharides. The polypeptide is Probable UDP-arabinopyranose mutase 4 (Arabidopsis thaliana (Mouse-ear cress)).